A 732-amino-acid polypeptide reads, in one-letter code: uncharacterized protein (732 aa).

2 helical membrane-spanning segments follow: residues 687–707 (YLFP…GSDL) and 712–732 (GVKV…YYTS).

This sequence belongs to the FadG family.

The protein resides in the cell membrane. This is an uncharacterized protein from Bacillus subtilis (strain 168).